The sequence spans 266 residues: MVLSDKKFVLVTGGSSGLGFETIKALIQTNQPYHVFLGCLFPDEGQSAVLSLQRDVPETPSTLESILVDVTDDESIDRCFHTVQSKIGHLDVLVNNAGISLQASEIGMREAWNRCYDVNVTGAQIMTHTFVPLLLRSNDPRLIFITSGLSSLTPMSNVYTPTRMTVPAGWPKPEVHPYRAYRATKTALNMVMLEWHWQLREDGVKTWGVSPGFLATNLGASFAGMDGAPPVLPASVGGRLVASVVEGDRDTDVGKIVLKDGEVQPF.

Positions 18, 69, and 96 each coordinate NADP(+). Ser147 acts as the Proton donor in catalysis. The NADP(+) site is built by Tyr181, Lys185, and Thr216. Tyr181 acts as the Proton acceptor in catalysis. Catalysis depends on Lys185, which acts as the Lowers pKa of active site Tyr.

This sequence belongs to the short-chain dehydrogenases/reductases (SDR) family.

It functions in the pathway secondary metabolite biosynthesis. Short-chain dehydrogenase/reductase; part of the gene cluster that mediates the biosynthesis of the tropolone class of fungal maleic anhydrides. The pathway begins with the synthesis of 3-methylorcinaldehyde by the non-reducing polyketide synthase (PKS) tropA. 3-methylorcinaldehyde is the substrate for the FAD-dependent monooxygenase tropB to yield a dearomatized hydroxycyclohexadione. The 2-oxoglutarate-dependent dioxygenase tropC then performs the oxidative ring expansion to provide the first tropolone metabolite stipitaldehyde. Trop D converts stipitaldehyde into stipitacetal which is in turn converted to stipitalide by the short-chain dehydrogenase/reductase tropE. The next steps involve tropF, tropG, tropH, tropI and tropJ to form successive tropolone maleic anhydrides including stipitaldehydic, stipitatonic and stipitatic acids. This chain is Short-chain dehydrogenase/reductase tropE, found in Talaromyces stipitatus (strain ATCC 10500 / CBS 375.48 / QM 6759 / NRRL 1006) (Penicillium stipitatum).